The primary structure comprises 959 residues: Transcription factor 1 (959 aa).

2 C2H2-type zinc fingers span residues 2-24 and 30-52; these read VFCTYCGHSFTRDEHLERHILTH and FKCFTCHMSFARRDLLQGHYTVH. A DNA-binding region (zn(2)-C6 fungal-type) is located at residues 79–105; it reads CSNCAKTKTKCDKKFPCSRCASRNLRC. Residues 154-226 are disordered; that stretch reads PTGHVEESSK…SFPGFDDYNQ (73 aa). Low complexity predominate over residues 163–178; that stretch reads KSSSPSGSPTSISHNS.

Its subcellular location is the nucleus. Its function is as follows. Elsinochromes biosynthesis cluster-specific transcription factor that positively regulates the expression of cluster genes including RDT1, PKS1, PRF1 and HP1, and subsequent elsinochromes production. The sequence is that of Transcription factor 1 from Elsinoe fawcettii (Citrus scab fungus).